The chain runs to 73 residues: MSTGIWIMIVIIALLVGAVGGFFFARRYMENYLKNNPPINEDMLRTMMLQMGQKPSQKKLHQMMTAMQNQSKK.

The helical transmembrane segment at 5–25 (IWIMIVIIALLVGAVGGFFFA) threads the bilayer.

The protein belongs to the UPF0154 family.

Its subcellular location is the cell membrane. This Pediococcus pentosaceus (strain ATCC 25745 / CCUG 21536 / LMG 10740 / 183-1w) protein is UPF0154 protein PEPE_0872.